The chain runs to 244 residues: Cobalt transport protein CbiM (244 aa).

The signal sequence occupies residues 1 to 20; that stretch reads MRKITFIAALLSLLPRYALA. 6 helical membrane passes run 31–51, 63–83, 95–115, 117–137, 161–181, and 201–221; these read KWCLLWYSIYIPFLMAGLIYI, ILLGFAGAFVFALSALKLPSV, LGAILLGPLPMAVIGGIVLLF, ALLLAHGGITTLGANAFSMAV, VFLGAASGDLMTYIITSLQLA, and IFAVTQLPLAIGEGILTVIVL.

It belongs to the CbiM family. As to quaternary structure, forms an energy-coupling factor (ECF) transporter complex composed of an ATP-binding protein (A component, CbiO), a transmembrane protein (T component, CbiQ) and 2 possible substrate-capture proteins (S components, CbiM and CbiN) of unknown stoichimetry.

It is found in the cell membrane. Its pathway is cofactor biosynthesis; adenosylcobalamin biosynthesis. Part of the energy-coupling factor (ECF) transporter complex CbiMNOQ involved in cobalt import. The protein is Cobalt transport protein CbiM of Thermosediminibacter oceani (strain ATCC BAA-1034 / DSM 16646 / JW/IW-1228P).